The sequence spans 132 residues: Subtelomeric hrmA-associated cluster protein AFUB_079000 (132 aa).

In terms of biological role, part of the subtelomeric hrmA-associated cluster (HAC) containing genes that alter the hyphal surface (such as reduced total chitin or increased beta-glucan exposure) and perturb inter-hyphal interactions within the developing biofilms, resulting in a loss of vertically aligned polarized growing filaments. Consequently, this hypoxia-typic morphotype (called H-MORPH) with altered biofilm architecture leads to increased hypoxia fitness, increased host inflammation, rapid disease progression, and mortality in a murine model of invasive aspergillosis. This Aspergillus fumigatus (strain CBS 144.89 / FGSC A1163 / CEA10) (Neosartorya fumigata) protein is Subtelomeric hrmA-associated cluster protein AFUB_079000.